We begin with the raw amino-acid sequence, 96 residues long: Mitochondrial import inner membrane translocase subunit Tim13-A (96 aa).

Positions 47–70 (CFRKCIGKPGGSLDNSEQKCIAMC) match the Twin CX3C motif motif. 2 cysteine pairs are disulfide-bonded: Cys-47–Cys-70 and Cys-51–Cys-66.

The protein belongs to the small Tim family. As to quaternary structure, heterohexamer; composed of 3 copies of TIMM8 (TIMM8A or TIMM8B) and 3 copies of TIMM13, named soluble 70 kDa complex. Associates with the TIM22 complex, whose core is composed of TIMM22.

It localises to the mitochondrion inner membrane. Its function is as follows. Mitochondrial intermembrane chaperone that participates in the import and insertion of some multi-pass transmembrane proteins into the mitochondrial inner membrane. Also required for the transfer of beta-barrel precursors from the TOM complex to the sorting and assembly machinery (SAM complex) of the outer membrane. Acts as a chaperone-like protein that protects the hydrophobic precursors from aggregation and guide them through the mitochondrial intermembrane space. The TIMM8-TIMM13 complex mediates the import of some proteins while the predominant TIMM9-TIMM10 70 kDa complex mediates the import of much more proteins. This chain is Mitochondrial import inner membrane translocase subunit Tim13-A (timm13-a), found in Xenopus laevis (African clawed frog).